Reading from the N-terminus, the 249-residue chain is SRR1-like protein (249 aa).

The interval 1–40 (MAAAALEPWSAVAPRRRKRAAGRRPRPGEGPRAEPEADGE) is disordered. Residues 14–25 (PRRRKRAAGRRP) are compositionally biased toward basic residues. Residues 26 to 40 (RPGEGPRAEPEADGE) are compositionally biased toward basic and acidic residues.

The protein belongs to the SRR1 family.

The protein resides in the cytoplasm. Functionally, plays a role in the regulation of heme biosynthesis and in the regulation of the expression of core clock genes. This is SRR1-like protein (Srrd) from Mus musculus (Mouse).